The following is a 361-amino-acid chain: Peptide chain release factor 1 (361 aa).

Glutamine 235 bears the N5-methylglutamine mark.

Belongs to the prokaryotic/mitochondrial release factor family. In terms of processing, methylated by PrmC. Methylation increases the termination efficiency of RF1.

It localises to the cytoplasm. Its function is as follows. Peptide chain release factor 1 directs the termination of translation in response to the peptide chain termination codons UAG and UAA. This is Peptide chain release factor 1 from Chlamydia abortus (strain DSM 27085 / S26/3) (Chlamydophila abortus).